The chain runs to 640 residues: 1,4-alpha-glucan branching enzyme GlgB (640 aa).

D317 (nucleophile) is an active-site residue. E370 (proton donor) is an active-site residue.

This sequence belongs to the glycosyl hydrolase 13 family. GlgB subfamily. In terms of assembly, monomer.

It catalyses the reaction Transfers a segment of a (1-&gt;4)-alpha-D-glucan chain to a primary hydroxy group in a similar glucan chain.. It participates in glycan biosynthesis; glycogen biosynthesis. In terms of biological role, catalyzes the formation of the alpha-1,6-glucosidic linkages in glycogen by scission of a 1,4-alpha-linked oligosaccharide from growing alpha-1,4-glucan chains and the subsequent attachment of the oligosaccharide to the alpha-1,6 position. This is 1,4-alpha-glucan branching enzyme GlgB from Nitratidesulfovibrio vulgaris (strain DP4) (Desulfovibrio vulgaris).